A 156-amino-acid chain; its full sequence is MDTQMCALFAQPLTLLPDLNICSWQTVNGSQRTFFVWTWTMTSSGLRTRAINLKQWNGLTYRSYAILSWNPRETPLHLTRVTPSPQVTKGSLSTTSIPINTKIQLICLPAVAMLATPPKTTDNCRTSWAALQMLLLLWHLSSWIKTQRRWRISLTE.

Its function is as follows. May be required for viral persistance in the host. The polypeptide is Protein L* (Theiler's murine encephalomyelitis virus (strain DA) (TMEV)).